Consider the following 59-residue polypeptide: Large ribosomal subunit protein bL32 (59 aa).

Residues methionine 1 to alanine 28 form a disordered region.

The protein belongs to the bacterial ribosomal protein bL32 family.

The chain is Large ribosomal subunit protein bL32 from Aromatoleum aromaticum (strain DSM 19018 / LMG 30748 / EbN1) (Azoarcus sp. (strain EbN1)).